The chain runs to 344 residues: uncharacterized protein (344 aa).

Residues 242-343 form the HTH araC/xylS-type domain; the sequence is RGITALVRSK…GVAPSEYSRR (102 aa). 2 consecutive DNA-binding regions (H-T-H motif) follow at residues 263 to 284 and 310 to 333; these read TDVA…AEEG and VQQV…KRWY.

This is an uncharacterized protein from Mycobacterium bovis (strain ATCC BAA-935 / AF2122/97).